The primary structure comprises 185 residues: Neuronal vesicle trafficking-associated protein 1 (185 aa).

The Cytoplasmic segment spans residues 1-82 (MVKLGNNFAE…ITEGVTERFK (82 aa)). A helical; Signal-anchor for type II membrane protein transmembrane segment spans residues 83-103 (VSVLVLFALAFLTCVVFLVVY). Topologically, residues 104-185 (KVYKYDRACP…QETEAAEKSA (82 aa)) are lumenal. Residues 129–164 (ESYYTEQDSSAREKFYTVINHYNVAKQSITRSVSPW) are required for GRIP1 interaction.

It belongs to the NSG family. In terms of assembly, forms a complex with GRIP1, GRIA2 and STX12 through direct interaction with GRIP1; controls the intracellular fate of AMPAR and the endosomal sorting of the GRIA2 subunit toward recycling and membrane targeting. Interacts with STX12. Interacts with APP; could regulate APP processing. Interacts with FAM171A1. Pituitary and less in adrenal gland and testis. Expressed in the hippocampus throughout development. At P0, highly and broadly expressed throughout the cortical plate, but is down-regulated overall at P8 and P14, but remains relatively enriched in layer V. At P0 is expressed ubiquitously in the developing cerebellum namely Purkinje neurons as well as granule neurons. However, it becomes restricted to Purkinje cells by P8. This exclusive expression in Purkinje cells is maintained throughout adulthood.

It localises to the membrane. The protein localises to the golgi apparatus. It is found in the trans-Golgi network membrane. The protein resides in the endosome membrane. Its subcellular location is the cell projection. It localises to the dendrite. The protein localises to the early endosome membrane. It is found in the late endosome membrane. The protein resides in the lysosome lumen. Its subcellular location is the recycling endosome membrane. It localises to the cytoplasmic vesicle membrane. The protein localises to the golgi stack membrane. It is found in the endosome. The protein resides in the multivesicular body membrane. Its subcellular location is the endoplasmic reticulum membrane. Plays a role in the recycling mechanism in neurons of multiple receptors, including AMPAR, APP and L1CAM and acts at the level of early endosomes to promote sorting of receptors toward a recycling pathway. Regulates sorting and recycling of GRIA2 through interaction with GRIP1 and then contributes to the regulation of synaptic transmission and plasticity by affecting the recycling and targeting of AMPA receptors to the synapse. Is required for faithful sorting of L1CAM to axons by facilitating trafficking from somatodendritic early endosome or the recycling endosome. In an other hand, induces apoptosis via the activation of CASP3 in response to DNA damage. The polypeptide is Neuronal vesicle trafficking-associated protein 1 (Mus musculus (Mouse)).